Here is a 109-residue protein sequence, read N- to C-terminus: Large ribosomal subunit protein uL24 (109 aa).

Belongs to the universal ribosomal protein uL24 family. In terms of assembly, part of the 50S ribosomal subunit.

Functionally, one of two assembly initiator proteins, it binds directly to the 5'-end of the 23S rRNA, where it nucleates assembly of the 50S subunit. Its function is as follows. One of the proteins that surrounds the polypeptide exit tunnel on the outside of the subunit. This is Large ribosomal subunit protein uL24 from Ehrlichia ruminantium (strain Gardel).